Consider the following 122-residue polypeptide: Small ribosomal subunit protein uS13 (122 aa).

Residues R99–K122 form a disordered region.

It belongs to the universal ribosomal protein uS13 family. As to quaternary structure, part of the 30S ribosomal subunit. Forms a loose heterodimer with protein S19. Forms two bridges to the 50S subunit in the 70S ribosome.

Functionally, located at the top of the head of the 30S subunit, it contacts several helices of the 16S rRNA. In the 70S ribosome it contacts the 23S rRNA (bridge B1a) and protein L5 of the 50S subunit (bridge B1b), connecting the 2 subunits; these bridges are implicated in subunit movement. Contacts the tRNAs in the A and P-sites. This Rhodopseudomonas palustris (strain HaA2) protein is Small ribosomal subunit protein uS13.